The primary structure comprises 404 residues: Probable tRNA sulfurtransferase (404 aa).

Positions 60-165 (QPIVEALKLV…DEAAYISYEE (106 aa)) constitute a THUMP domain. Residues 183 to 184 (ML), 208 to 209 (HF), arginine 265, glycine 287, and glutamine 296 each bind ATP.

This sequence belongs to the ThiI family.

It localises to the cytoplasm. It carries out the reaction [ThiI sulfur-carrier protein]-S-sulfanyl-L-cysteine + a uridine in tRNA + 2 reduced [2Fe-2S]-[ferredoxin] + ATP + H(+) = [ThiI sulfur-carrier protein]-L-cysteine + a 4-thiouridine in tRNA + 2 oxidized [2Fe-2S]-[ferredoxin] + AMP + diphosphate. The catalysed reaction is [ThiS sulfur-carrier protein]-C-terminal Gly-Gly-AMP + S-sulfanyl-L-cysteinyl-[cysteine desulfurase] + AH2 = [ThiS sulfur-carrier protein]-C-terminal-Gly-aminoethanethioate + L-cysteinyl-[cysteine desulfurase] + A + AMP + 2 H(+). It functions in the pathway cofactor biosynthesis; thiamine diphosphate biosynthesis. Functionally, catalyzes the ATP-dependent transfer of a sulfur to tRNA to produce 4-thiouridine in position 8 of tRNAs, which functions as a near-UV photosensor. Also catalyzes the transfer of sulfur to the sulfur carrier protein ThiS, forming ThiS-thiocarboxylate. This is a step in the synthesis of thiazole, in the thiamine biosynthesis pathway. The sulfur is donated as persulfide by IscS. This Streptococcus pyogenes serotype M1 protein is Probable tRNA sulfurtransferase.